We begin with the raw amino-acid sequence, 941 residues long: UvrABC system protein A (941 aa).

37 to 44 (GLSGSGKS) lines the ATP pocket. The segment at 260 to 287 (CFKCKMSFEELEPLSFSFNSPKGACESC) adopts a C4-type zinc-finger fold. 2 consecutive ABC transporter domains span residues 316 to 585 (IFGY…NNHS) and 605 to 937 (KEKH…KFLA). Position 637 to 644 (637 to 644 (GVSGSGKS)) interacts with ATP. The segment at 737 to 763 (CEKCQGDGDIKIEMHFLPDVLVQCDSC) adopts a C4-type zinc-finger fold.

The protein belongs to the ABC transporter superfamily. UvrA family. Forms a heterotetramer with UvrB during the search for lesions.

Its subcellular location is the cytoplasm. Functionally, the UvrABC repair system catalyzes the recognition and processing of DNA lesions. UvrA is an ATPase and a DNA-binding protein. A damage recognition complex composed of 2 UvrA and 2 UvrB subunits scans DNA for abnormalities. When the presence of a lesion has been verified by UvrB, the UvrA molecules dissociate. The chain is UvrABC system protein A from Helicobacter pylori (strain J99 / ATCC 700824) (Campylobacter pylori J99).